Reading from the N-terminus, the 543-residue chain is Protein lin-14 (543 aa).

2 disordered regions span residues 165-228 and 268-291; these read PNGH…SSNH and APAT…PRKP. Positions 177–213 are enriched in polar residues; that stretch reads SMQTDEQQVKWSSPSSVDSNGQKTDSSAASAGDNQNI. Over residues 268–282 the composition is skewed to low complexity; the sequence is APATNGTTNGATKAA.

Post-translationally, cleaved by caspase ced-3 in vitro.

The protein resides in the nucleus. In terms of biological role, heterochronic protein which controls the choice of stage specific cell fates. Involved in the temporal progression of vulval fate patterning, possibly by inhibiting lin-12. Acts as a transcription factor involved in the stage-specific repression of insulin/insulin-like growth factor gene ins-33. In Caenorhabditis briggsae, this protein is Protein lin-14 (lin-14).